The primary structure comprises 294 residues: MNITQLQILAAVVETGNFSAAALQLDLSQSAVSRAIAALEDELGVVLLSRGRFGARPTRVGERVLQLAQRMLQLHDSIVHEVNLEKGLQGGHLRIASFRSAATHVLPPRLALFRQRCPGVSVSIIETDPQGVEQALREGKVDIGLLPLPRSEEFDTWEITRDEYVVLLPSTAHPLGQPLTWAQLSRYEFILYNYAECTTAVRQHWATARQELKVAYEIKEDSTIVSMVAQGLGAAILPRLAAVPIPPEVAAHSLPIPLERVIGAAILASALQVPSVFAFLDVLRQTAPEVRATG.

Residues 1–58 (MNITQLQILAAVVETGNFSAAALQLDLSQSAVSRAIAALEDELGVVLLSRGRFGARPT) form the HTH lysR-type domain. A DNA-binding region (H-T-H motif) is located at residues 18 to 37 (FSAAALQLDLSQSAVSRAIA).

It belongs to the LysR transcriptional regulatory family.

The chain is Probable HTH-type transcriptional regulator LrrA (lrrA) from Synechococcus elongatus (strain ATCC 33912 / PCC 7942 / FACHB-805) (Anacystis nidulans R2).